A 200-amino-acid chain; its full sequence is TATA-box-binding protein (200 aa).

A run of 2 repeats spans residues 25–101 (LQNI…ARII) and 115–192 (IQNI…YPVL).

This sequence belongs to the TBP family. Belongs to the TFIID complex together with the TBP-associated factors (TAFs). Binds DNA as monomer.

Its subcellular location is the nucleus. In terms of biological role, general transcription factor that functions at the core of the DNA-binding multiprotein factor TFIID. Binding of TFIID to the TATA box is the initial transcriptional step of the pre-initiation complex (PIC), playing a role in the activation of eukaryotic genes transcribed by RNA polymerase II. The protein is TATA-box-binding protein of Mesembryanthemum crystallinum (Common ice plant).